The following is a 300-amino-acid chain: tRNA-cytidine(32) 2-sulfurtransferase (300 aa).

The short motif at 57-62 (SGGKDS) is the PP-loop motif element. 3 residues coordinate [4Fe-4S] cluster: Cys-132, Cys-135, and Cys-223.

The protein belongs to the TtcA family. Homodimer. Mg(2+) serves as cofactor. [4Fe-4S] cluster is required as a cofactor.

It localises to the cytoplasm. The catalysed reaction is cytidine(32) in tRNA + S-sulfanyl-L-cysteinyl-[cysteine desulfurase] + AH2 + ATP = 2-thiocytidine(32) in tRNA + L-cysteinyl-[cysteine desulfurase] + A + AMP + diphosphate + H(+). Its pathway is tRNA modification. Its function is as follows. Catalyzes the ATP-dependent 2-thiolation of cytidine in position 32 of tRNA, to form 2-thiocytidine (s(2)C32). The sulfur atoms are provided by the cysteine/cysteine desulfurase (IscS) system. This chain is tRNA-cytidine(32) 2-sulfurtransferase, found in Xanthomonas campestris pv. campestris (strain B100).